The following is a 107-amino-acid chain: Insulin (107 aa).

A signal peptide spans 1–24 (MALWIRSLPLLALLVFSGPGTSYA). Intrachain disulfides connect Cys-31–Cys-93, Cys-43–Cys-106, and Cys-92–Cys-97. Residues 57-84 (DVEQPLVSSPLRGEAGVLPFQQEEYEKV) constitute a propeptide, c peptide.

The protein belongs to the insulin family. As to quaternary structure, heterodimer of a B chain and an A chain linked by two disulfide bonds.

It localises to the secreted. Its function is as follows. Insulin decreases blood glucose concentration. It increases cell permeability to monosaccharides, amino acids and fatty acids. It accelerates glycolysis, the pentose phosphate cycle, and glycogen synthesis in liver. In Gallus gallus (Chicken), this protein is Insulin (INS).